The chain runs to 354 residues: Lipoyl synthase, mitochondrial (354 aa).

[4Fe-4S] cluster is bound by residues cysteine 91, cysteine 96, cysteine 102, cysteine 122, cysteine 126, cysteine 129, and serine 337. A Radical SAM core domain is found at 107–326; the sequence is DDSLATATIM…AEYSKKLGFL (220 aa).

This sequence belongs to the radical SAM superfamily. Lipoyl synthase family. The cofactor is [4Fe-4S] cluster.

Its subcellular location is the mitochondrion. The catalysed reaction is [[Fe-S] cluster scaffold protein carrying a second [4Fe-4S](2+) cluster] + N(6)-octanoyl-L-lysyl-[protein] + 2 oxidized [2Fe-2S]-[ferredoxin] + 2 S-adenosyl-L-methionine + 4 H(+) = [[Fe-S] cluster scaffold protein] + N(6)-[(R)-dihydrolipoyl]-L-lysyl-[protein] + 4 Fe(3+) + 2 hydrogen sulfide + 2 5'-deoxyadenosine + 2 L-methionine + 2 reduced [2Fe-2S]-[ferredoxin]. It functions in the pathway protein modification; protein lipoylation via endogenous pathway; protein N(6)-(lipoyl)lysine from octanoyl-[acyl-carrier-protein]: step 2/2. Catalyzes the radical-mediated insertion of two sulfur atoms into the C-6 and C-8 positions of the octanoyl moiety bound to the lipoyl domains of lipoate-dependent enzymes, thereby converting the octanoylated domains into lipoylated derivatives. This Caenorhabditis elegans protein is Lipoyl synthase, mitochondrial.